Consider the following 396-residue polypeptide: MSTTVTVLTDTWSRRAKRLEGDAKILAIGTATPASWVDQTTYPDFYFRITNSQHLLEHKEKFRRICNKSKIRKRHLVLTEELLKKNPNLCTYNETSLNTRQDILVSEVPKLGKEAAMKAIKEWGRPISEITHLVFCTTSGVDMPGADFQLTKLLGLNSSVKRLMMYQQGCNAGAAMLRLAKDLAESNKGGRVLVVCAEITINIFRGPSLEQDDNLLAQCLFGDGAAAMIVAADPRPGLETPLFELVSSAQTIVPNTDSHLKLHLREMGLTFHCSKAVPSVLAENVEDCLVKAFEPYGISDWNSIFWVFHPGGNAIVDRVEERLGLGPEKLRASRDVLSEYGNLTSACVLFILDEMRKKSKKDEQMTTGEGLEWGVVFGFGPGLTIDTIIIRSVPIN.

Residue C170 is part of the active site.

The protein belongs to the thiolase-like superfamily. Chalcone/stilbene synthases family.

The catalysed reaction is (E)-4-coumaroyl-CoA + 3 malonyl-CoA + 3 H(+) = 2',4,4',6'-tetrahydroxychalcone + 3 CO2 + 4 CoA. The protein operates within secondary metabolite biosynthesis; flavonoid biosynthesis. The primary product of this enzyme is 4,2',4',6'-tetrahydroxychalcone (also termed naringenin-chalcone or chalcone) which can under specific conditions spontaneously isomerize into naringenin. The sequence is that of Chalcone synthase B (CHSB) from Ipomoea purpurea (Common morning glory).